A 331-amino-acid polypeptide reads, in one-letter code: Tetraacyldisaccharide 4'-kinase (331 aa).

55-62 (TAGGNGKT) provides a ligand contact to ATP.

It belongs to the LpxK family.

The catalysed reaction is a lipid A disaccharide + ATP = a lipid IVA + ADP + H(+). Its pathway is glycolipid biosynthesis; lipid IV(A) biosynthesis; lipid IV(A) from (3R)-3-hydroxytetradecanoyl-[acyl-carrier-protein] and UDP-N-acetyl-alpha-D-glucosamine: step 6/6. In terms of biological role, transfers the gamma-phosphate of ATP to the 4'-position of a tetraacyldisaccharide 1-phosphate intermediate (termed DS-1-P) to form tetraacyldisaccharide 1,4'-bis-phosphate (lipid IVA). This Edwardsiella ictaluri (strain 93-146) protein is Tetraacyldisaccharide 4'-kinase.